The sequence spans 598 residues: Probable translation initiation factor IF-2 (598 aa).

Residues 3 to 225 (LRCPIVSVLG…GLAQKFLEQK (223 aa)) enclose the tr-type G domain. The tract at residues 12–19 (GHVDHGKT) is G1. 12–19 (GHVDHGKT) serves as a coordination point for GTP. Residues 37-41 (GITQH) form a G2 region. The tract at residues 76 to 79 (DTPG) is G3. GTP-binding positions include 76 to 80 (DTPGH) and 130 to 133 (NKVD). Positions 130–133 (NKVD) are G4. A G5 region spans residues 200–202 (SAM).

The protein belongs to the TRAFAC class translation factor GTPase superfamily. Classic translation factor GTPase family. IF-2 subfamily.

Its function is as follows. Function in general translation initiation by promoting the binding of the formylmethionine-tRNA to ribosomes. Seems to function along with eIF-2. The protein is Probable translation initiation factor IF-2 of Methanococcus maripaludis (strain C5 / ATCC BAA-1333).